Reading from the N-terminus, the 184-residue chain is Uroplakin-2 (184 aa).

Positions 1–25 are cleaved as a signal peptide; sequence MAPLLPIRTLPLILILLALLSPGAA. Positions 26-84 are excised as a propeptide; it reads DFNISSLSGLLSPALTESLLVALPPCHLTGGNATLMVRRANDSKVVTSSFVVPPCRGRR. Residues Asn-28, Asn-57, and Asn-66 are each glycosylated (N-linked (GlcNAc...) asparagine). Over 85–155 the chain is Lumenal; it reads ELVSVVDSGA…IGLGMARTGG (71 aa). The helical transmembrane segment at 156-176 threads the bilayer; it reads MVVITVLLSVAMFLLVLGFII. Residues 177–184 are Cytoplasmic-facing; it reads ALALGSRK.

Belongs to the uroplakin-2 family. Interacts with uroplakin-1a (UPK1A). In terms of tissue distribution, expressed in ureter.

It localises to the cell membrane. Functionally, component of the asymmetric unit membrane (AUM); a highly specialized biomembrane elaborated by terminally differentiated urothelial cells. May play an important role in regulating the assembly of the AUM. The chain is Uroplakin-2 (UPK2) from Homo sapiens (Human).